We begin with the raw amino-acid sequence, 116 residues long: Small ribosomal subunit protein uS13 (116 aa).

Residues 92 to 116 (RRGLPVRGQNTKNNARTRKGAKRSR) form a disordered region. Residues 106–116 (ARTRKGAKRSR) show a composition bias toward basic residues.

This sequence belongs to the universal ribosomal protein uS13 family. In terms of assembly, part of the 30S ribosomal subunit. Forms a loose heterodimer with protein S19. Forms two bridges to the 50S subunit in the 70S ribosome.

Functionally, located at the top of the head of the 30S subunit, it contacts several helices of the 16S rRNA. In the 70S ribosome it contacts the 23S rRNA (bridge B1a) and protein L5 of the 50S subunit (bridge B1b), connecting the 2 subunits; these bridges are implicated in subunit movement. Contacts the tRNAs in the A and P-sites. The chain is Small ribosomal subunit protein uS13 from Lactobacillus delbrueckii subsp. bulgaricus (strain ATCC 11842 / DSM 20081 / BCRC 10696 / JCM 1002 / NBRC 13953 / NCIMB 11778 / NCTC 12712 / WDCM 00102 / Lb 14).